Consider the following 308-residue polypeptide: uncharacterized protein (308 aa).

Helical transmembrane passes span 10-30, 91-111, 115-135, 178-198, 219-239, 251-271, and 288-308; these read IILL…TNLI, LPTI…VVIL, LGLI…LIGI, VIPM…LGLM, ITVL…VDIL, LIVL…KHSI, and INYT…IAFF.

To M.jannaschii MJ0871, MJ1556 and MJ1589.

It is found in the cell membrane. This is an uncharacterized protein from Methanocaldococcus jannaschii (strain ATCC 43067 / DSM 2661 / JAL-1 / JCM 10045 / NBRC 100440) (Methanococcus jannaschii).